The sequence spans 251 residues: Probable transcriptional regulatory protein RSal33209_2002 (251 aa).

The protein belongs to the TACO1 family.

Its subcellular location is the cytoplasm. The sequence is that of Probable transcriptional regulatory protein RSal33209_2002 from Renibacterium salmoninarum (strain ATCC 33209 / DSM 20767 / JCM 11484 / NBRC 15589 / NCIMB 2235).